The sequence spans 259 residues: Virion protein US10 homolog (259 aa).

The segment at 162–174 (CAHWCCLGHAFGC) is a zinc-finger region.

Belongs to the herpesviridae US10 family. In terms of processing, phosphorylated.

The protein resides in the virion tegument. The protein localises to the host nucleus matrix. The protein is Virion protein US10 homolog of Equine herpesvirus 4 (strain 1942) (EHV-4).